The primary structure comprises 105 residues: Nucleoid-associated protein RPE_4812 (105 aa).

It belongs to the YbaB/EbfC family. In terms of assembly, homodimer.

It localises to the cytoplasm. The protein localises to the nucleoid. Functionally, binds to DNA and alters its conformation. May be involved in regulation of gene expression, nucleoid organization and DNA protection. The protein is Nucleoid-associated protein RPE_4812 of Rhodopseudomonas palustris (strain BisA53).